A 441-amino-acid polypeptide reads, in one-letter code: N-succinylarginine dihydrolase (441 aa).

Substrate is bound by residues 19–28, Asn110, and 137–138; these read AGLSFGNEAS and HR. Residue Glu174 is part of the active site. Arg212 is a substrate binding site. Residue His248 is part of the active site. 2 residues coordinate substrate: Asp250 and Asn359. Cys365 functions as the Nucleophile in the catalytic mechanism.

The protein belongs to the succinylarginine dihydrolase family. As to quaternary structure, homodimer.

It catalyses the reaction N(2)-succinyl-L-arginine + 2 H2O + 2 H(+) = N(2)-succinyl-L-ornithine + 2 NH4(+) + CO2. It functions in the pathway amino-acid degradation; L-arginine degradation via AST pathway; L-glutamate and succinate from L-arginine: step 2/5. Catalyzes the hydrolysis of N(2)-succinylarginine into N(2)-succinylornithine, ammonia and CO(2). This is N-succinylarginine dihydrolase from Cronobacter sakazakii (strain ATCC BAA-894) (Enterobacter sakazakii).